A 264-amino-acid polypeptide reads, in one-letter code: DNA-directed RNA polymerase subunit Rpo3 (264 aa).

Positions 203, 206, and 209 each coordinate [3Fe-4S] cluster.

Belongs to the archaeal Rpo3/eukaryotic RPB3 RNA polymerase subunit family. In terms of assembly, part of the RNA polymerase complex. [3Fe-4S] cluster is required as a cofactor.

It localises to the cytoplasm. It carries out the reaction RNA(n) + a ribonucleoside 5'-triphosphate = RNA(n+1) + diphosphate. Its function is as follows. DNA-dependent RNA polymerase (RNAP) catalyzes the transcription of DNA into RNA using the four ribonucleoside triphosphates as substrates. The chain is DNA-directed RNA polymerase subunit Rpo3 from Archaeoglobus fulgidus (strain ATCC 49558 / DSM 4304 / JCM 9628 / NBRC 100126 / VC-16).